Consider the following 289-residue polypeptide: 3-hydroxy-16-methoxy-2,3-dihydrotabersonine N-methyltransferase (289 aa).

Residues 71–80 (MLDVGSGLGG) are SAM motif I. Positions 134–142 (GKFDVVFTI) are SAM motif II. The segment at 161–170 (VAAPGAAIII) is SAM motif III. Positions 287–289 (KSI) match the Microbody targeting signal motif.

This sequence belongs to the class I-like SAM-binding methyltransferase superfamily. gTMT family. In terms of assembly, homodimer. Mainly expressed in young leaves, and, to a lower extent, in mature leaves, flowers, stems and roots (at protein level).

It is found in the thylakoid. It localises to the peroxisome. It catalyses the reaction (3R)-3-hydroxy-16-methoxy-2,3-dihydrotabersonine + S-adenosyl-L-methionine = deacetoxyvindoline + S-adenosyl-L-homocysteine + H(+). It participates in alkaloid biosynthesis; vindoline biosynthesis. With respect to regulation, inhibited by gamma-tocopherol. Functionally, S-adenosyl-L-methionine-dependent N-methyltransferase that catalyzes a nitrogen methylation involved in vindoline biosynthesis. Displays a strict requirement for a 2,3-dihydro bond in the aspidosperma skeleton. Can use 2,3-dihydrotabersonine, 2,3-dihydro-3-hydroxytabersonine and 2,3,6,7-tetraydro-3-hydroxytabersonine as substrates, but not tabersonine, vincadifformine, 21-hydroxycyclolochnericine, tryptamine, norharmane, harmaline, catharanthine, norajmaline, ajmaline, serpentine, ajmalicine, yohimbine or gamma-tocopherol. Inactive with picrinine as substrate. This Catharanthus roseus (Madagascar periwinkle) protein is 3-hydroxy-16-methoxy-2,3-dihydrotabersonine N-methyltransferase.